The primary structure comprises 463 residues: Putative pentatricopeptide repeat-containing protein At4g17915 (463 aa).

12 PPR repeats span residues Ser-12–Pro-46, Asp-47–Pro-81, Asp-82–Pro-116, Asp-117–Pro-152, Gly-153–Pro-186, Glu-187–Pro-221, Asn-222–Tyr-256, Asp-257–His-291, Asp-292–Ala-326, Asp-327–Leu-361, Asn-362–Lys-392, and Asp-393–Ile-427.

It belongs to the PPR family. P subfamily.

This is Putative pentatricopeptide repeat-containing protein At4g17915 from Arabidopsis thaliana (Mouse-ear cress).